A 231-amino-acid chain; its full sequence is MIYLRKANERGHANHGWLDSWHTFSFANYYDPNFMGFSALRVINDDVIEAGQGFGTHPHKDMEILTYVLEGTVEHQDSMGNKEQVPAGEFQIMSAGTGIRHSEYNPSSTERLHLYQIWIMPEENGITPRYEQRRFDAVQGKQLVLSPDARDGSLKVHQDMELYRWALLKDEQSVHQIAAERRVWIQVVKGNVTINGVKASTSDGLAIWDEQAISIHADSDSEVLLFDLPPV.

Residues histidine 57, histidine 59, histidine 101, and glutamate 103 each coordinate a divalent metal cation.

Belongs to the pirin family. Zn(2+) is required as a cofactor. Requires Co(2+) as cofactor. The cofactor is Fe(2+).

The enzyme catalyses quercetin + O2 = 2-(3,4-dihydroxybenzoyloxy)-4,6-dihydroxybenzoate + CO. Its pathway is flavonoid metabolism; quercetin degradation. Its activity is regulated as follows. Inhibited by kojic acid, sodium diethyldithiocarbamate and 1,10-phenanthroline monohydrochloride. Has quercetin 2,3-dioxygenase activity in vitro. Its physiological role is unknown; however, may provide a mechanism that would avoid inhibition of key cellular proteins, such as DNA gyrase, by quercetin. The chain is Quercetin 2,3-dioxygenase (yhhW) from Escherichia coli (strain K12).